We begin with the raw amino-acid sequence, 168 residues long: Myosin regulatory light chain 11 (168 aa).

The residue at position 2 (A2) is a N,N,N-trimethylalanine. Phosphoserine is present on S15. EF-hand domains are found at residues 24–59 (TQIQEFKEAFTVIDQNRDGIIDKDDLRETFAAMGRL), 94–129 (DPEDVIMGAFKVLDPDGKGSIKKSFLEELLTTQCDR), and 130–165 (FTPEEIKNMWAAFPPDVAGNVDYKNICYVITHGEDK). Residues D37, N39, D41, and D48 each contribute to the Ca(2+) site.

As to quaternary structure, myosin is a hexamer of 2 heavy chains and 4 light chains. The N-terminus is blocked. N,N,N-trimethylalanine, found in other myosin light chains would not have been detected in the N-terminal tryptic peptide in PubMed:7358336 because it would remain trimethylated and ninhydrin negative after hydrolysis.

Myosin regulatory subunit that plays an essential to maintain muscle integrity during early development. Plays a role in muscle contraction. This chain is Myosin regulatory light chain 11 (MYL11), found in Gallus gallus (Chicken).